Consider the following 462-residue polypeptide: Ribosomal protein uS12 methylthiotransferase RimO (462 aa).

An MTTase N-terminal domain is found at 22–133 (ASVAFLHLGC…IIEVLQRVRQ (112 aa)). Residues C31, C67, C96, C171, C175, and C178 each coordinate [4Fe-4S] cluster. Residues 157–386 (TTGRFVSYLK…VAIQQPISAA (230 aa)) enclose the Radical SAM core domain. The TRAM domain occupies 389–460 (QALIGQTVDV…LYDLTGEINH (72 aa)).

Belongs to the methylthiotransferase family. RimO subfamily. The cofactor is [4Fe-4S] cluster.

The protein resides in the cytoplasm. It carries out the reaction L-aspartate(89)-[ribosomal protein uS12]-hydrogen + (sulfur carrier)-SH + AH2 + 2 S-adenosyl-L-methionine = 3-methylsulfanyl-L-aspartate(89)-[ribosomal protein uS12]-hydrogen + (sulfur carrier)-H + 5'-deoxyadenosine + L-methionine + A + S-adenosyl-L-homocysteine + 2 H(+). In terms of biological role, catalyzes the methylthiolation of an aspartic acid residue of ribosomal protein uS12. The chain is Ribosomal protein uS12 methylthiotransferase RimO from Prochlorococcus marinus (strain MIT 9211).